The chain runs to 396 residues: 1-deoxy-D-xylulose 5-phosphate reductoisomerase (396 aa).

Positions 15, 16, 17, 18, 41, and 129 each coordinate NADPH. Residue K130 participates in 1-deoxy-D-xylulose 5-phosphate binding. E131 provides a ligand contact to NADPH. D155 provides a ligand contact to Mn(2+). Residues S156, E157, S182, and H205 each contribute to the 1-deoxy-D-xylulose 5-phosphate site. A Mn(2+)-binding site is contributed by E157. G211 serves as a coordination point for NADPH. Positions 218, 223, 224, and 227 each coordinate 1-deoxy-D-xylulose 5-phosphate. A Mn(2+)-binding site is contributed by E227.

The protein belongs to the DXR family. It depends on Mg(2+) as a cofactor. The cofactor is Mn(2+).

The enzyme catalyses 2-C-methyl-D-erythritol 4-phosphate + NADP(+) = 1-deoxy-D-xylulose 5-phosphate + NADPH + H(+). The protein operates within isoprenoid biosynthesis; isopentenyl diphosphate biosynthesis via DXP pathway; isopentenyl diphosphate from 1-deoxy-D-xylulose 5-phosphate: step 1/6. Functionally, catalyzes the NADPH-dependent rearrangement and reduction of 1-deoxy-D-xylulose-5-phosphate (DXP) to 2-C-methyl-D-erythritol 4-phosphate (MEP). The protein is 1-deoxy-D-xylulose 5-phosphate reductoisomerase of Xanthomonas oryzae pv. oryzae (strain PXO99A).